The following is a 258-amino-acid chain: UPF0246 protein CKO_03380 (258 aa).

It belongs to the UPF0246 family.

In Citrobacter koseri (strain ATCC BAA-895 / CDC 4225-83 / SGSC4696), this protein is UPF0246 protein CKO_03380.